The primary structure comprises 440 residues: Kinetochore protein NUF2 homolog (440 aa).

Coiled-coil stretches lie at residues 142–239 (LGLL…LRSQ) and 299–386 (INEQ…RQTN).

The protein belongs to the NUF2 family. Component of the NDC80 complex, which consists of NDC80, NUF2, SPC24 and SPC25.

The protein localises to the chromosome. The protein resides in the centromere. Its function is as follows. Acts as a component of the essential kinetochore-associated NDC80 complex, which is required for chromosome segregation and spindle checkpoint activity to ensure proper cell division. The sequence is that of Kinetochore protein NUF2 homolog from Arabidopsis thaliana (Mouse-ear cress).